A 155-amino-acid chain; its full sequence is Small ribosomal subunit protein uS7cz/uS7cy (155 aa).

In terms of assembly, component of the chloroplast small ribosomal subunit (SSU). Mature 70S chloroplast ribosomes of higher plants consist of a small (30S) and a large (50S) subunit. The 30S small subunit contains 1 molecule of ribosomal RNA (16S rRNA) and 24 different proteins. The 50S large subunit contains 3 rRNA molecules (23S, 5S and 4.5S rRNA) and 33 different proteins.

It localises to the plastid. The protein resides in the chloroplast. Its function is as follows. Component of the chloroplast ribosome (chloro-ribosome), a dedicated translation machinery responsible for the synthesis of chloroplast genome-encoded proteins, including proteins of the transcription and translation machinery and components of the photosynthetic apparatus. This is Small ribosomal subunit protein uS7cz/uS7cy (rps7-A) from Spinacia oleracea (Spinach).